The following is a 134-amino-acid chain: Large ribosomal subunit protein uL16c (134 aa).

This sequence belongs to the universal ribosomal protein uL16 family. Part of the 50S ribosomal subunit.

The protein localises to the plastid. The protein resides in the chloroplast. In Guillardia theta (Cryptophyte), this protein is Large ribosomal subunit protein uL16c.